Consider the following 853-residue polypeptide: DNA mismatch repair protein MutS (853 aa).

Residue 614-621 (GPNMGGKS) coordinates ATP.

This sequence belongs to the DNA mismatch repair MutS family.

This protein is involved in the repair of mismatches in DNA. It is possible that it carries out the mismatch recognition step. This protein has a weak ATPase activity. The protein is DNA mismatch repair protein MutS of Escherichia coli (strain SE11).